A 122-amino-acid polypeptide reads, in one-letter code: Small ribosomal subunit protein uS13 (122 aa).

The interval 95–122 (GLPVHGQRTHTNARTRKGPRRGAVGKKK) is disordered.

Belongs to the universal ribosomal protein uS13 family. As to quaternary structure, part of the 30S ribosomal subunit. Forms a loose heterodimer with protein S19. Forms two bridges to the 50S subunit in the 70S ribosome.

In terms of biological role, located at the top of the head of the 30S subunit, it contacts several helices of the 16S rRNA. In the 70S ribosome it contacts the 23S rRNA (bridge B1a) and protein L5 of the 50S subunit (bridge B1b), connecting the 2 subunits; these bridges are implicated in subunit movement. Contacts the tRNAs in the A and P-sites. In Nitratidesulfovibrio vulgaris (strain DSM 19637 / Miyazaki F) (Desulfovibrio vulgaris), this protein is Small ribosomal subunit protein uS13.